A 104-amino-acid chain; its full sequence is N(4)-acetylcytidine amidohydrolase (104 aa).

The ASCH domain maps to 6–94 (ITFFQRFQND…IAEIYPNQTQ (89 aa)). The Proton acceptor role is filled by Lys21. The active-site Nucleophile is the Thr24. Glu74 (proton donor) is an active-site residue.

It belongs to the N(4)-acetylcytidine amidohydrolase family.

It catalyses the reaction N(4)-acetylcytidine + H2O = cytidine + acetate + H(+). The enzyme catalyses N(4)-acetyl-2'-deoxycytidine + H2O = 2'-deoxycytidine + acetate + H(+). The catalysed reaction is N(4)-acetylcytosine + H2O = cytosine + acetate + H(+). Its function is as follows. Catalyzes the hydrolysis of N(4)-acetylcytidine (ac4C). The chain is N(4)-acetylcytidine amidohydrolase (yqfB) from Salmonella dublin (strain CT_02021853).